We begin with the raw amino-acid sequence, 252 residues long: 5-oxoprolinase subunit A (252 aa).

It belongs to the LamB/PxpA family. As to quaternary structure, forms a complex composed of PxpA, PxpB and PxpC.

It catalyses the reaction 5-oxo-L-proline + ATP + 2 H2O = L-glutamate + ADP + phosphate + H(+). Functionally, catalyzes the cleavage of 5-oxoproline to form L-glutamate coupled to the hydrolysis of ATP to ADP and inorganic phosphate. The chain is 5-oxoprolinase subunit A from Kocuria rhizophila (strain ATCC 9341 / DSM 348 / NBRC 103217 / DC2201).